A 131-amino-acid chain; its full sequence is Small ribosomal subunit protein uS11 (131 aa).

It belongs to the universal ribosomal protein uS11 family. In terms of assembly, part of the 30S ribosomal subunit. Interacts with proteins S7 and S18. Binds to IF-3.

Located on the platform of the 30S subunit, it bridges several disparate RNA helices of the 16S rRNA. Forms part of the Shine-Dalgarno cleft in the 70S ribosome. The chain is Small ribosomal subunit protein uS11 from Geobacter metallireducens (strain ATCC 53774 / DSM 7210 / GS-15).